The following is a 303-amino-acid chain: Deoxyhypusine hydroxylase (303 aa).

HEAT-like PBS-type repeat units follow at residues 56–82 (LKHELAYCLGQMKDRRALPVLKQVLQD) and 89–115 (VRHEAGEALGAIGDPEVLELLREYAQD). The Fe cation site is built by histidine 58, histidine 91, and glutamate 92. The interval 139 to 158 (DSPDTNPYLSVDPAPPAEEK) is disordered. 3 HEAT-like PBS-type repeats span residues 176–202 (HRYRAMFALRNIGGEEAVLALADGLQI), 207–233 (FRHEIGYVLGQMQHKAAVPGLSAALER), and 240–266 (VRHECAEALGSIAHEDCLKALRAHVGD). Positions 209, 242, and 243 each coordinate Fe cation.

Belongs to the deoxyhypusine hydroxylase family. Fe(2+) serves as cofactor.

The catalysed reaction is [eIF5A protein]-deoxyhypusine + AH2 + O2 = [eIF5A protein]-hypusine + A + H2O. Its pathway is protein modification; eIF5A hypusination. Its function is as follows. Catalyzes the hydroxylation of the N(6)-(4-aminobutyl)-L-lysine intermediate produced by deoxyhypusine synthase/DHPS on a critical lysine of the eukaryotic translation initiation factor 5A/eIF-5A. This is the second step of the post-translational modification of that lysine into an unusual amino acid residue named hypusine. Hypusination is unique to mature eIF-5A factor and is essential for its function. The protein is Deoxyhypusine hydroxylase (dohh) of Xenopus laevis (African clawed frog).